The following is a 262-amino-acid chain: Abhydrolase domain-containing protein ACTT2-2 (262 aa).

Residues 260 to 262 (SKL) carry the Peroxisomal targeting signal type 1 motif.

It belongs to the AB hydrolase superfamily. AKT2 hydrolase family.

It localises to the peroxisome. Its pathway is mycotoxin biosynthesis. Abhydrolase domain-containing protein; part of the gene clusters that mediate the biosynthesis of the host-selective toxins (HSTs) ACT-toxins responsible for brown spot of tangerine disease by the tangerine pathotype which affects tangerines and mandarins. ACT-toxins consist of three moieties, 9,10-epoxy-8-hydroxy-9-methyl-decatrienoic acid (EDA), valine and a polyketide. ACT-toxin I is toxic to both citrus and pear; toxin II the 5''-deoxy derivative of ACT-toxin I, is highly toxic to pear and slightly toxic to citrus. On cellular level, ACT-toxins affect plasma membrane of susceptible cells and cause a sudden increase in loss of K(+) after a few minutes of toxin treatment. The acyl-CoA ligase ACTT1, the hydrolase ACTT2, the enoyl-CoA hydratases ACTT3 and ACTT6, and the acyl-CoA synthetase ACTT5 are all involved in the biosynthesis of the AK-, AF- and ACT-toxin common 9,10-epoxy-8-hydroxy-9-methyl-decatrienoic acid (EDA) structural moiety. The exact role of each enzyme, and of additional enzymes identified within the AF-toxin clusters have still to be determined. On the other hand, ACTTS1 to ACTTS4 are specific to the tangerine pathotype. The function of ACTTS3 is to elongate the polyketide chain portion of ACT-toxin that is unique to this toxin. The enoyl-reductase ACTTS2 might complement the missing enoyl-reductase (ER) domain in ACTTS3 in the synthesis of the polyketide portion of ACT-toxin. The roles of the nonribosomal peptide synthetases-related proteins ACTTS1 and ACTTS4 have also still not been elucidated. The protein is Abhydrolase domain-containing protein ACTT2-2 (ACTT2-2) of Alternaria alternata (Alternaria rot fungus).